Consider the following 369-residue polypeptide: UDP-N-acetyl-3-dehydro-alpha-D-glucosamine 3-aminotranferase (369 aa).

At lysine 190 the chain carries N6-(pyridoxal phosphate)lysine.

The protein belongs to the DegT/DnrJ/EryC1 family. It depends on pyridoxal 5'-phosphate as a cofactor.

The enzyme catalyses UDP-2-acetamido-3-amino-2,3-dideoxy-alpha-D-glucopyranose + 2-oxoglutarate = UDP-2-acetamido-3-dehydro-2-deoxy-alpha-D-glucopyranose + L-glutamate. The protein operates within bacterial outer membrane biogenesis; LPS lipid A biosynthesis. Its function is as follows. Aminotranferase involved in the synthesis of 2,3-diamino-2,3-dideoxy-D-glucopyranose (GlcN3N), which is a component of lipid A in some species. Catalyzes the amination of UDP-2-acetamido-3-dehydro-2-deoxy-alpha-D-glucopyranose (UDP-3-oxo-GlcNAc) to UDP-2-acetamido-3-amino-2,3-dideoxy-alpha-D-glucopyranose (UDP-GlcNAc3N), using L-glutamate as the amine donor. Other amine donors, such as alanine and glutamine, can substitute for glutamate, but product formation is slower. The sequence is that of UDP-N-acetyl-3-dehydro-alpha-D-glucosamine 3-aminotranferase from Acidithiobacillus ferrooxidans (strain ATCC 23270 / DSM 14882 / CIP 104768 / NCIMB 8455) (Ferrobacillus ferrooxidans (strain ATCC 23270)).